Here is an 808-residue protein sequence, read N- to C-terminus: Transducin beta-like protein 3 (808 aa).

The residue at position 2 (Ala-2) is an N-acetylalanine. 13 WD repeats span residues 64 to 105 (EDQE…RLWK), 107 to 146 (IHTA…GTHH), 149 to 190 (GSPG…CLAV), 193 to 232 (AHYS…ATRT), 245 to 284 (LPEE…CVYT), 290 to 329 (GPGQ…LQKQ), 332 to 372 (GYSE…CQIL), 374 to 413 (GHTD…QVMC), 419 to 459 (GHTH…LSKN), 477 to 516 (CHDK…LLGV), 519 to 560 (GHRR…KTFE), 562 to 602 (HDAS…RTLD), and 604 to 642 (HEDK…EQAE). Ser-257 is subject to Phosphoserine. Lys-407 is covalently cross-linked (Glycyl lysine isopeptide (Lys-Gly) (interchain with G-Cter in SUMO2)).

As to quaternary structure, part of the small subunit (SSU) processome, composed of more than 70 proteins and the RNA chaperone small nucleolar RNA (snoRNA) U3.

Its subcellular location is the nucleus. It localises to the nucleolus. In terms of biological role, part of the small subunit (SSU) processome, first precursor of the small eukaryotic ribosomal subunit. During the assembly of the SSU processome in the nucleolus, many ribosome biogenesis factors, an RNA chaperone and ribosomal proteins associate with the nascent pre-rRNA and work in concert to generate RNA folding, modifications, rearrangements and cleavage as well as targeted degradation of pre-ribosomal RNA by the RNA exosome. This Homo sapiens (Human) protein is Transducin beta-like protein 3.